Here is a 1063-residue protein sequence, read N- to C-terminus: Unconventional myosin-Ic (1063 aa).

M1 carries the N-acetylmethionine modification. T10 bears the Phosphoserine mark. A Myosin motor domain is found at 47–731 (GVQDFVLLEN…TLFATEDSLE (685 aa)). ATP is bound by residues N88, Y96, 139–148 (SGESGAGKTE), and 192–196 (NDNSS). An N6-methyllysine modification is found at K383. Phosphoserine is present on S408. K486 carries the N6-acetyllysine modification. Phosphoserine is present on S536. The tract at residues 608 to 630 (LLQLVEILRSKEPAYIRCIKPND) is actin-binding. IQ domains follow at residues 734–757 (RQSL…FLRV) and 758–786 (KRSA…AAQT). Phosphoserine is present on residues S864 and S1041. Residues 885-1059 (KDNYPQSVPR…NGHLAVVAPR (175 aa)) enclose the TH1 domain.

Belongs to the TRAFAC class myosin-kinesin ATPase superfamily. Myosin family. Interacts (via its IQ motifs) with CABP1 and CIB1; the interaction with CABP1 and CIB1 is calcium-dependent. Interacts (via tail domain) with PLEKHB1 (via PH domain); the interaction is not affected by the presence or absence of calcium and CALM. Interacts with POLR1A. Interacts with POLR2A. Component of the B-WICH complex, at least composed of SMARCA5/SNF2H, BAZ1B/WSTF, SF3B1, DEK, MYO1C, ERCC6, MYBBP1A and DDX21. Interacts (via its IQ motifs) with CALM; this precludes interaction with YWHAB. Interacts with YWHAB; this precludes interaction with CALM. Interacts with RPS6. Interacts with actin. Interacts with LLPH. Interacts with GLUT4. Interacts (via its IQ motifs) with SH3BGRL3; the interaction is dependent on calcium and takes place at membrane ruffles. Post-translationally, isoform 2 contains a N-acetylmethionine at position 1. In terms of tissue distribution, isoform 3 is expressed in small intestine, pancreas, brain, kidney, skin, heart muscle, testis, striated muscle, spleen, liver and lung (at protein level). Expressed in brain, testis, adrenal glands, thymus, spleen, kidney, lung, heart, cochlea and vestibule. Expressed in sensory hair cells of the inner ear. Expressed in adipocytes.

The protein resides in the cytoplasm. The protein localises to the nucleus. It localises to the cell cortex. It is found in the cell projection. Its subcellular location is the stereocilium membrane. The protein resides in the cytoplasmic vesicle. The protein localises to the ruffle membrane. It localises to the nucleolus. It is found in the nucleoplasm. Functionally, myosins are actin-based motor molecules with ATPase activity. Unconventional myosins serve in intracellular movements. Their highly divergent tails bind to membranous compartments, which then are moved relative to actin filaments. Involved in glucose transporter recycling in response to insulin by regulating movement of intracellular GLUT4-containing vesicles to the plasma membrane. Component of the hair cell's (the sensory cells of the inner ear) adaptation-motor complex. Acts as a mediator of adaptation of mechanoelectrical transduction in stereocilia of vestibular hair cells. Binds phosphoinositides and links the actin cytoskeleton to cellular membranes. Involved in regulation of transcription. Associated with transcriptional active ribosomal genes. Appears to cooperate with the WICH chromatin-remodeling complex to facilitate transcription. Necessary for the formation of the first phosphodiester bond during transcription initiation. This chain is Unconventional myosin-Ic (Myo1c), found in Mus musculus (Mouse).